The following is a 314-amino-acid chain: DNA-directed RNA polymerase subunit alpha (314 aa).

The tract at residues 1 to 228 is alpha N-terminal domain (alpha-NTD); sequence MIEIEKPKIE…EHLSIFVNLT (228 aa). The tract at residues 245–314 is alpha C-terminal domain (alpha-CTD); the sequence is KEKVLEMTIE…DLGLSLRNEN (70 aa).

Belongs to the RNA polymerase alpha chain family. In terms of assembly, homodimer. The RNAP catalytic core consists of 2 alpha, 1 beta, 1 beta' and 1 omega subunit. When a sigma factor is associated with the core the holoenzyme is formed, which can initiate transcription.

The catalysed reaction is RNA(n) + a ribonucleoside 5'-triphosphate = RNA(n+1) + diphosphate. DNA-dependent RNA polymerase catalyzes the transcription of DNA into RNA using the four ribonucleoside triphosphates as substrates. This is DNA-directed RNA polymerase subunit alpha from Listeria innocua serovar 6a (strain ATCC BAA-680 / CLIP 11262).